Reading from the N-terminus, the 388-residue chain is Chorismate synthase (388 aa).

Arg39 and Arg45 together coordinate NADP(+). The tract at residues Glu95 to Lys118 is disordered. FMN contacts are provided by residues Arg130–Ser132, Asn251–Ala252, Gly296, Lys311–Thr315, and Arg337.

It belongs to the chorismate synthase family. As to quaternary structure, homotetramer. It depends on FMNH2 as a cofactor.

The catalysed reaction is 5-O-(1-carboxyvinyl)-3-phosphoshikimate = chorismate + phosphate. It functions in the pathway metabolic intermediate biosynthesis; chorismate biosynthesis; chorismate from D-erythrose 4-phosphate and phosphoenolpyruvate: step 7/7. In terms of biological role, catalyzes the anti-1,4-elimination of the C-3 phosphate and the C-6 proR hydrogen from 5-enolpyruvylshikimate-3-phosphate (EPSP) to yield chorismate, which is the branch point compound that serves as the starting substrate for the three terminal pathways of aromatic amino acid biosynthesis. This reaction introduces a second double bond into the aromatic ring system. In Listeria monocytogenes serotype 4b (strain F2365), this protein is Chorismate synthase.